A 555-amino-acid polypeptide reads, in one-letter code: Potassium-transporting ATPase potassium-binding subunit (555 aa).

The next 10 helical transmembrane spans lie at 2 to 22 (IWVAVVITMLLFILVAKPTGI), 60 to 80 (QYALSLVLLNGFMIVVVYFIF), 130 to 150 (IGITFLMFAAPATTLALVMAF), 173 to 193 (VFLPITFMAALVFVALGVPQT), 246 to 266 (MSNILQMMLMMLLPTALPFTY), 278 to 298 (ILFVSLFMVFLLGFITITTSE), 374 to 394 (AGFVNIIMYAIIAVFISGLMV), 412 to 432 (LIAVTILFHPLLILGFSALAL), 483 to 503 (LVMFLGRYFSLITMLAVAASL), and 525 to 545 (GIFIGTIVIVGALTFFPMLVL).

This sequence belongs to the KdpA family. As to quaternary structure, the system is composed of three essential subunits: KdpA, KdpB and KdpC.

Its subcellular location is the cell membrane. In terms of biological role, part of the high-affinity ATP-driven potassium transport (or Kdp) system, which catalyzes the hydrolysis of ATP coupled with the electrogenic transport of potassium into the cytoplasm. This subunit binds the extracellular potassium ions and delivers the ions to the membrane domain of KdpB through an intramembrane tunnel. The polypeptide is Potassium-transporting ATPase potassium-binding subunit (Bacillus cereus (strain AH187)).